Consider the following 277-residue polypeptide: Polar tube protein 2 (277 aa).

A signal peptide spans 1–18 (MLLLLAITAVVSATMVHP). The N-linked (GlcNAc...) asparagine glycan is linked to Asn134. The span at 237–251 (QKKEVKDTKEGEKSA) shows a compositional bias: basic and acidic residues. Residues 237-277 (QKKEVKDTKEGEKSASQDSDGEGTAEDAEVQQPSADGEGLE) are disordered. Acidic residues predominate over residues 255–265 (SDGEGTAEDAE).

As to quaternary structure, interacts with PTP1 and PTP3.

The protein resides in the spore polar tube. Its function is as follows. Involved in formation of a polar tube through which the infectious agent is passed on to the host cell. The chain is Polar tube protein 2 (PTP2) from Encephalitozoon cuniculi (strain GB-M1) (Microsporidian parasite).